The sequence spans 310 residues: tRNA-cytidine(32) 2-sulfurtransferase (310 aa).

The PP-loop motif signature appears at 47 to 52 (SGGKDS). Residues C122, C125, and C213 each coordinate [4Fe-4S] cluster.

The protein belongs to the TtcA family. Homodimer. Mg(2+) is required as a cofactor. It depends on [4Fe-4S] cluster as a cofactor.

It localises to the cytoplasm. The enzyme catalyses cytidine(32) in tRNA + S-sulfanyl-L-cysteinyl-[cysteine desulfurase] + AH2 + ATP = 2-thiocytidine(32) in tRNA + L-cysteinyl-[cysteine desulfurase] + A + AMP + diphosphate + H(+). The protein operates within tRNA modification. In terms of biological role, catalyzes the ATP-dependent 2-thiolation of cytidine in position 32 of tRNA, to form 2-thiocytidine (s(2)C32). The sulfur atoms are provided by the cysteine/cysteine desulfurase (IscS) system. The chain is tRNA-cytidine(32) 2-sulfurtransferase from Haemophilus influenzae (strain 86-028NP).